The sequence spans 425 residues: tRNA(Ile)-lysidine synthase (425 aa).

27–32 (SGGLDS) provides a ligand contact to ATP.

It belongs to the tRNA(Ile)-lysidine synthase family.

It is found in the cytoplasm. The enzyme catalyses cytidine(34) in tRNA(Ile2) + L-lysine + ATP = lysidine(34) in tRNA(Ile2) + AMP + diphosphate + H(+). Ligates lysine onto the cytidine present at position 34 of the AUA codon-specific tRNA(Ile) that contains the anticodon CAU, in an ATP-dependent manner. Cytidine is converted to lysidine, thus changing the amino acid specificity of the tRNA from methionine to isoleucine. The protein is tRNA(Ile)-lysidine synthase of Streptococcus pneumoniae (strain JJA).